A 561-amino-acid chain; its full sequence is Carboxylesterase 1F (561 aa).

Residues 1-17 (MFLSTLFLVSLATCVIC) form the signal peptide. Cysteine 87 and cysteine 116 form a disulfide bridge. Serine 221 functions as the Acyl-ester intermediate in the catalytic mechanism. Cysteine 273 and cysteine 284 are joined by a disulfide. Residues glutamate 353 and histidine 466 each act as charge relay system in the active site. The Prevents secretion from ER signature appears at 558–561 (HNEL).

It belongs to the type-B carboxylesterase/lipase family. Expressed in liver, white and brown adipose tissue, kidney, intestine, adrenal, heart and ovary. Not detected in muscle, lung, testis, brain and spleen.

The protein resides in the lipid droplet. Its subcellular location is the cytoplasm. The protein localises to the cytosol. It localises to the endoplasmic reticulum. It is found in the microsome. It carries out the reaction a carboxylic ester + H2O = an alcohol + a carboxylate + H(+). The enzyme catalyses all-trans-retinyl hexadecanoate + H2O = all-trans-retinol + hexadecanoate + H(+). Functionally, involved in the detoxification of xenobiotics and in the activation of ester and amide prodrugs. Hydrolyzes retinyl esters. Hydrolyzes p-nitrophenyl butyrate (PNPB), triacylglycerol and monoacylglycerol. Shows higher activity against PNPB, a short-chain fatty acid ester, than against triolein, a long-chain fatty acid ester. Shows no detectable activity against diacylglycerol, cholesterol ester or phospholipids. May play a role in adipocyte lipolysis. This chain is Carboxylesterase 1F, found in Mus musculus (Mouse).